A 422-amino-acid polypeptide reads, in one-letter code: Phospholipase D Z (422 aa).

The signal sequence occupies residues 1–18 (MMMKLLFLIALFGCVVNS). N-linked (GlcNAc...) asparagine glycosylation is present at N53. Positions 148-175 (GAGILHTKVIVVDQVSAYLGSANLDWRS) constitute a PLD phosphodiesterase 1 domain. Active-site residues include H153, K155, and D160. N-linked (GlcNAc...) asparagine glycosylation is found at N225 and N320. One can recognise a PLD phosphodiesterase 2 domain in the interval 357-383 (FTRVNHAKYMVTDEQSYVGTSNWSEDY). Active-site residues include H362, K364, and D369. N-linked (GlcNAc...) asparagine glycosylation is present at N378.

This sequence belongs to the phospholipase D family.

The catalysed reaction is a 1,2-diacyl-sn-glycero-3-phosphocholine + H2O = a 1,2-diacyl-sn-glycero-3-phosphate + choline + H(+). Inhibited by butan-1-ol. Hydrolyzes membrane phospholipids, such as PtdCho (phosphatidylcholine), producing the free headgroup and PtdOH (phosphatidic acid; signaling molecule on its own). This Dictyostelium discoideum (Social amoeba) protein is Phospholipase D Z (pldZ).